A 642-amino-acid chain; its full sequence is Threonine--tRNA ligase (642 aa).

Residues 1–61 (MPIITLPDGS…SEDANLEIIT (61 aa)) enclose the TGS domain. The interval 243 to 534 (DHRKIGKALN…ITEEYAGFFP (292 aa)) is catalytic. 3 residues coordinate Zn(2+): cysteine 334, histidine 385, and histidine 511.

It belongs to the class-II aminoacyl-tRNA synthetase family. In terms of assembly, homodimer. The cofactor is Zn(2+).

It is found in the cytoplasm. The catalysed reaction is tRNA(Thr) + L-threonine + ATP = L-threonyl-tRNA(Thr) + AMP + diphosphate + H(+). Functionally, catalyzes the attachment of threonine to tRNA(Thr) in a two-step reaction: L-threonine is first activated by ATP to form Thr-AMP and then transferred to the acceptor end of tRNA(Thr). Also edits incorrectly charged L-seryl-tRNA(Thr). The polypeptide is Threonine--tRNA ligase (Histophilus somni (strain 2336) (Haemophilus somnus)).